A 571-amino-acid chain; its full sequence is Septation ring formation regulator EzrA (571 aa).

At 1 to 3 (MYY) the chain is on the extracellular side. The helical transmembrane segment at 4–22 (MLIGFIIVVIAVIGAGYIL) threads the bilayer. Over 23–571 (KRKHYQRINE…ESKVSVDDIE (549 aa)) the chain is Cytoplasmic. Coiled coils occupy residues 248 to 298 (LAQM…DTLE), 326 to 374 (DALA…ASGE), 400 to 437 (KFAE…ERER), and 478 to 529 (RIAE…ENHF).

Belongs to the EzrA family.

It is found in the cell membrane. Negative regulator of FtsZ ring formation; modulates the frequency and position of FtsZ ring formation. Inhibits FtsZ ring formation at polar sites. Interacts either with FtsZ or with one of its binding partners to promote depolymerization. This chain is Septation ring formation regulator EzrA, found in Listeria monocytogenes serotype 4b (strain CLIP80459).